The primary structure comprises 554 residues: Protein translocase subunit SecD (554 aa).

The next 6 helical transmembrane spans lie at 10 to 30, 392 to 412, 414 to 434, 435 to 455, 491 to 511, and 516 to 536; these read LVIL…MFYA, AGMV…IASY, LFGF…FAVM, GAIG…TIGT, AIID…VLGA, and GFAV…IWVV.

Belongs to the SecD/SecF family. SecD subfamily. Forms a complex with SecF. Part of the essential Sec protein translocation apparatus which comprises SecA, SecYEG and auxiliary proteins SecDF-YajC and YidC.

It localises to the cell inner membrane. Its function is as follows. Part of the Sec protein translocase complex. Interacts with the SecYEG preprotein conducting channel. SecDF uses the proton motive force (PMF) to complete protein translocation after the ATP-dependent function of SecA. This chain is Protein translocase subunit SecD, found in Rhodobacter capsulatus (strain ATCC BAA-309 / NBRC 16581 / SB1003).